The following is a 475-amino-acid chain: ATP synthase subunit beta (475 aa).

Position 152–159 (152–159 (GGAGVGKT)) interacts with ATP.

It belongs to the ATPase alpha/beta chains family. In terms of assembly, F-type ATPases have 2 components, CF(1) - the catalytic core - and CF(0) - the membrane proton channel. CF(1) has five subunits: alpha(3), beta(3), gamma(1), delta(1), epsilon(1). CF(0) has three main subunits: a(1), b(2) and c(9-12). The alpha and beta chains form an alternating ring which encloses part of the gamma chain. CF(1) is attached to CF(0) by a central stalk formed by the gamma and epsilon chains, while a peripheral stalk is formed by the delta and b chains.

The protein localises to the cell inner membrane. The catalysed reaction is ATP + H2O + 4 H(+)(in) = ADP + phosphate + 5 H(+)(out). Its function is as follows. Produces ATP from ADP in the presence of a proton gradient across the membrane. The catalytic sites are hosted primarily by the beta subunits. The chain is ATP synthase subunit beta from Wolbachia sp. subsp. Drosophila simulans (strain wRi).